A 548-amino-acid polypeptide reads, in one-letter code: T-complex protein 1 subunit theta (548 aa).

Residues 527-548 form a disordered region; it reads QATGGPKPRGPKAQDEDDDGMA.

The protein belongs to the TCP-1 chaperonin family. As to quaternary structure, heterooligomeric complex.

The protein localises to the cytoplasm. In terms of biological role, molecular chaperone; assists the folding of proteins upon ATP hydrolysis. Known to play a role, in vitro, in the folding of actin and tubulin. Required for correct subcellular localization of pgl-1. This Caenorhabditis elegans protein is T-complex protein 1 subunit theta (cct-8).